The chain runs to 402 residues: Potassium channel subfamily K member 9 (402 aa).

Residues 1-8 (MKRQNVRT) lie on the Cytoplasmic side of the membrane. A helical membrane pass occupies residues 9 to 29 (LSLIACTFTYLLVGAAVFDAL). Residues 30–88 (ESDHEMREEEKLKAEEVRLRGKYNISSDDYQQLELVILQSEPHRAGVQWKFAGSFYFAI) are Extracellular-facing. A glycan (N-linked (GlcNAc...) asparagine) is linked at asparagine 53. The pore-forming intramembrane region spans 89–101 (TVITTIGYGHAAP). K(+)-binding residues include threonine 93, isoleucine 94, glycine 95, and tyrosine 96. The interval 93–98 (TIGYGH) is selectivity filter 1. Residues 102–107 (GTDAGK) lie on the Extracellular side of the membrane. A helical transmembrane segment spans residues 108-128 (AFCMFYAVLGIPLTLVMFQSL). Residues 129–158 (GERMNTFVRYLLKRIKKCCGMRNTEVSMEN) are Cytoplasmic-facing. The chain crosses the membrane as a helical span at residues 159–179 (MVTVGFFSCMGTLCLGAAAFS). Topologically, residues 180–194 (QCEDWSFFHAYYYCF) are extracellular. The segment at residues 195–207 (ITLTTIGFGDFVA) is an intramembrane region (pore-forming). K(+)-binding residues include threonine 199, isoleucine 200, glycine 201, and phenylalanine 202. Residues 199-204 (TIGFGD) are selectivity filter 2. Residues 208-218 (LQAKGALQRKP) are Extracellular-facing. The chain crosses the membrane as a helical span at residues 219 to 239 (FYVAFSFMYILVGLTVIGAFL). Residues 240 to 402 (NLVVLRFLTM…HRLHLRRKSI (163 aa)) lie on the Cytoplasmic side of the membrane. The X-gate stretch occupies residues 243-248 (VLRFLT).

It belongs to the two pore domain potassium channel (TC 1.A.1.8) family. As to quaternary structure, homodimer. Heterodimer with KCNK1. Heterodimer with KCNK3. In terms of tissue distribution, expressed in adrenal glands mainly in outer zona glomerulosa and inner zona medullaris. Expressed in retinal ganglion cells. Expressed in dentate gyrus (at protein level).

The protein localises to the cell membrane. The protein resides in the mitochondrion inner membrane. It localises to the cell projection. Its subcellular location is the dendrite. It catalyses the reaction K(+)(in) = K(+)(out). It carries out the reaction Na(+)(in) = Na(+)(out). Its activity is regulated as follows. Inhibited by NTS:NTSR1 signaling in dentate gyrus granule cells. Functionally, k(+) channel that conducts voltage-dependent outward rectifying currents upon membrane depolarization. Voltage sensing is coupled to K(+) electrochemical gradient in an 'ion flux gating' mode where outward but not inward ion flow opens the gate. Changes ion selectivity and becomes permeable to Na(+) ions in response to extracellular acidification. Protonation of the pH sensor His-98 stabilizes C-type inactivation conformation likely converting the channel from outward K(+)-conducting, to inward Na(+)-conducting to nonconductive state. Homo- and heterodimerizes to form functional channels with distinct regulatory and gating properties. Allows K(+) currents with fast-gating kinetics important for the repolarization and hyperpolarization phases of action potentials. In granule neurons, hyperpolarizes the resting membrane potential to limit intrinsic neuronal excitability, but once the action potential threshold is reached, supports high-frequency action potential firing and increased neuronal excitability. Homomeric and/or heteromeric KCNK3:KCNK9 channels operate in cerebellar granule cells, whereas heteromeric KCNK1:KCNK9 enables currents in hippocampal dentate gyrus granule neurons. Dispensable for central chemosensory respiration i.e. breathing controlled by brainstem CO2/pH, it rather conducts pH-sensitive currents and controls the firing rate of serotonergic raphe neurons involved in potentiation of the respiratory chemoreflex. In retinal ganglion cells, mediates outward rectifying currents that regulate action potentials in response to acidification of the synaptic cleft. Involved in transmission of image-forming and nonimage-forming visual information in the retina. In adrenal gland, contributes to the maintenance of a hyperpolarized resting membrane potential of aldosterone-producing cells at zona glomerulosa and limits aldosterone release as part of a regulatory mechanism that controls arterial blood pressure and electrolyte homeostasis. The protein is Potassium channel subfamily K member 9 of Mus musculus (Mouse).